Consider the following 110-residue polypeptide: Large ribosomal subunit protein uL22 (110 aa).

The protein belongs to the universal ribosomal protein uL22 family. As to quaternary structure, part of the 50S ribosomal subunit.

Functionally, this protein binds specifically to 23S rRNA; its binding is stimulated by other ribosomal proteins, e.g. L4, L17, and L20. It is important during the early stages of 50S assembly. It makes multiple contacts with different domains of the 23S rRNA in the assembled 50S subunit and ribosome. Its function is as follows. The globular domain of the protein is located near the polypeptide exit tunnel on the outside of the subunit, while an extended beta-hairpin is found that lines the wall of the exit tunnel in the center of the 70S ribosome. This chain is Large ribosomal subunit protein uL22, found in Pectobacterium atrosepticum (strain SCRI 1043 / ATCC BAA-672) (Erwinia carotovora subsp. atroseptica).